The sequence spans 510 residues: Pyruvate kinase, cytosolic isozyme (510 aa).

A substrate-binding site is contributed by R50. K(+)-binding residues include N52, S54, D84, and T85. Residue 52-55 (NFSH) participates in ATP binding. The ATP site is built by R91 and K176. Residue E242 coordinates Mg(2+). Positions 265, 266, and 298 each coordinate substrate. D266 is a binding site for Mg(2+).

Belongs to the pyruvate kinase family. As to quaternary structure, homotetramer. Requires Mg(2+) as cofactor. The cofactor is K(+).

The protein localises to the cytoplasm. The catalysed reaction is pyruvate + ATP = phosphoenolpyruvate + ADP + H(+). It functions in the pathway carbohydrate degradation; glycolysis; pyruvate from D-glyceraldehyde 3-phosphate: step 5/5. This is Pyruvate kinase, cytosolic isozyme from Solanum tuberosum (Potato).